The following is a 993-amino-acid chain: ATP-dependent DNA helicase MPH1 (993 aa).

A Helicase ATP-binding domain is found at 94–261 (IVHKSLFQNT…EVVNNLDISK (168 aa)). Residue 107–114 (IPTGMGKT) participates in ATP binding. The DEAH box motif lies at 209–212 (DEAH). The Helicase C-terminal domain maps to 507-655 (KVERLHRQEQ…CIDYKKSDRI (149 aa)). Residues 530–551 (NDKLERSARRTGSSEEAQISGM) are disordered. Polar residues predominate over residues 539–551 (RTGSSEEAQISGM).

This sequence belongs to the DEAD box helicase family. DEAH subfamily. FANCM sub-subfamily. In terms of assembly, interacts with the MHF histone-fold complex to form the FANCM-MHF complex.

Its subcellular location is the nucleus. It catalyses the reaction ATP + H2O = ADP + phosphate + H(+). Functionally, ATP-dependent DNA helicase involved in DNA damage repair by homologous recombination and in genome maintenance. Capable of unwinding D-loops. Plays a role in limiting crossover recombinants during mitotic DNA double-strand break (DSB) repair. Component of a FANCM-MHF complex which promotes gene conversion at blocked replication forks, probably by reversal of the stalled fork. The protein is ATP-dependent DNA helicase MPH1 of Saccharomyces cerevisiae (strain YJM789) (Baker's yeast).